We begin with the raw amino-acid sequence, 190 residues long: Xanthine phosphoribosyltransferase (190 aa).

Xanthine-binding residues include L20 and N27. Residue 128-132 participates in 5-phospho-alpha-D-ribose 1-diphosphate binding; that stretch reads ANGKA. Xanthine is bound at residue K156.

Belongs to the purine/pyrimidine phosphoribosyltransferase family. Xpt subfamily. Homodimer.

The protein localises to the cytoplasm. The catalysed reaction is XMP + diphosphate = xanthine + 5-phospho-alpha-D-ribose 1-diphosphate. Its pathway is purine metabolism; XMP biosynthesis via salvage pathway; XMP from xanthine: step 1/1. Functionally, converts the preformed base xanthine, a product of nucleic acid breakdown, to xanthosine 5'-monophosphate (XMP), so it can be reused for RNA or DNA synthesis. This Pseudomonas fluorescens (strain ATCC BAA-477 / NRRL B-23932 / Pf-5) protein is Xanthine phosphoribosyltransferase.